A 1150-amino-acid chain; its full sequence is Pyruvate carboxylase (1150 aa).

The Biotin carboxylation domain occupies 3-455 (QIKKLLVANR…TTKFIEETPE (453 aa)). The ATP site is built by Lys-119, Lys-161, His-211, and Glu-278. An ATP-grasp domain is found at 123 to 319 (RTTAIKADLP…IVKTQILVAA (197 aa)). The active site involves Arg-294. The Pyruvate carboxyltransferase domain occupies 533–802 (VLLTDTTFRD…HLRTDIEGME (270 aa)). Position 541-545 (541-545 (RDAHQ)) interacts with substrate. Mn(2+)-binding residues include Asp-542, Lys-712, His-741, and His-743. Lys-712 carries the post-translational modification N6-carboxylysine. Residues 1071 to 1146 (KADKSNPSHI…ATGDLLIEIE (76 aa)) form the Biotinyl-binding domain. At Lys-1112 the chain carries N6-biotinyllysine.

Homotetramer. Requires biotin as cofactor.

It carries out the reaction hydrogencarbonate + pyruvate + ATP = oxaloacetate + ADP + phosphate + H(+). In terms of biological role, catalyzes a 2-step reaction, involving the ATP-dependent carboxylation of the covalently attached biotin in the first step and the transfer of the carboxyl group to pyruvate in the second. The protein is Pyruvate carboxylase (pycA) of Staphylococcus aureus (strain Mu50 / ATCC 700699).